Consider the following 311-residue polypeptide: MNYVEITMMINHELEPFIADILNEVGANGVVIEDSLELQKGRIETFGEIYELNPDDFPEEDVRVKVYFSELDYDASVIEQIKEKVDALNDVDVTRLEFSTHTVQEEDWANEWKNHFHAFKVSDKFVIVPSWESYDGLQDGEHAIHLDPGMAFGTGDHATTSMCLKLIEKYVEKGQSIVDVGTGSGILSIAAHKLGAKPIKALDLDSVAVKVAEDNFEKNDCLDAIQAEPGNLLKGETEKRDVIFANILAHIVDMMIDDSYALLNDNGLLITSGIIEEKEEMIIDHLKGVGYTIVEVMRDSGWVAIAARKEA.

Residues threonine 160, glycine 181, aspartate 203, and asparagine 246 each contribute to the S-adenosyl-L-methionine site.

Belongs to the methyltransferase superfamily. PrmA family.

It is found in the cytoplasm. The catalysed reaction is L-lysyl-[protein] + 3 S-adenosyl-L-methionine = N(6),N(6),N(6)-trimethyl-L-lysyl-[protein] + 3 S-adenosyl-L-homocysteine + 3 H(+). Methylates ribosomal protein L11. The chain is Ribosomal protein L11 methyltransferase from Macrococcus caseolyticus (strain JCSC5402) (Macrococcoides caseolyticum).